We begin with the raw amino-acid sequence, 704 residues long: Elongation factor G 1 (704 aa).

The region spanning 8-291 (ERYRNIGISA…AVIDYLPSPA (284 aa)) is the tr-type G domain. GTP-binding positions include 17 to 24 (AHIDAGKT), 88 to 92 (DTPGH), and 142 to 145 (NKMD).

This sequence belongs to the TRAFAC class translation factor GTPase superfamily. Classic translation factor GTPase family. EF-G/EF-2 subfamily.

The protein resides in the cytoplasm. Functionally, catalyzes the GTP-dependent ribosomal translocation step during translation elongation. During this step, the ribosome changes from the pre-translocational (PRE) to the post-translocational (POST) state as the newly formed A-site-bound peptidyl-tRNA and P-site-bound deacylated tRNA move to the P and E sites, respectively. Catalyzes the coordinated movement of the two tRNA molecules, the mRNA and conformational changes in the ribosome. This is Elongation factor G 1 from Burkholderia mallei (strain ATCC 23344).